The chain runs to 490 residues: Glutamate--tRNA ligase (490 aa).

The 'HIGH' region signature appears at 12 to 22 (PSPTGTPHVGL). The short motif at 256-260 (KLSKR) is the 'KMSKS' region element. Lys259 is a binding site for ATP.

It belongs to the class-I aminoacyl-tRNA synthetase family. Glutamate--tRNA ligase type 1 subfamily. In terms of assembly, monomer.

It is found in the cytoplasm. It catalyses the reaction tRNA(Glu) + L-glutamate + ATP = L-glutamyl-tRNA(Glu) + AMP + diphosphate. In terms of biological role, catalyzes the attachment of glutamate to tRNA(Glu) in a two-step reaction: glutamate is first activated by ATP to form Glu-AMP and then transferred to the acceptor end of tRNA(Glu). In Mycobacterium sp. (strain KMS), this protein is Glutamate--tRNA ligase.